The primary structure comprises 1079 residues: Ubiquitin carboxyl-terminal hydrolase 26 (1079 aa).

Basic residues predominate over residues 1–12; sequence MSRPNTRNKSKR. Residues 1–21 are disordered; sequence MSRPNTRNKSKRPRADDCESP. The USP domain maps to 106–446; sequence AGLTNLGATC…DAYMLMYKRI (341 aa). Catalysis depends on C115, which acts as the Nucleophile. The active-site Proton acceptor is H359. Positions 384–419 are disordered; the sequence is GLHPFGEKPGKSSDKTDQKPQGSSTADSVTNDDNNS. Positions 388 to 401 are enriched in basic and acidic residues; it reads FGEKPGKSSDKTDQ. Positions 402–417 are enriched in polar residues; sequence KPQGSSTADSVTNDDN. 3 consecutive DUSP domains span residues 495–598, 613–715, and 738–862; these read AYIT…DDFC, DVYR…FPSD, and AVKL…AEIV. The interval 948 to 972 is disordered; sequence EASAAVPVPDRRTSKRSRRTTSGNS. The Ubiquitin-like domain occupies 961–1037; it reads SKRSRRTTSG…LWVKDSEIYE (77 aa).

The protein belongs to the peptidase C19 family.

Its subcellular location is the nucleus. It catalyses the reaction Thiol-dependent hydrolysis of ester, thioester, amide, peptide and isopeptide bonds formed by the C-terminal Gly of ubiquitin (a 76-residue protein attached to proteins as an intracellular targeting signal).. In terms of biological role, recognizes and hydrolyzes the peptide bond at the C-terminal Gly of ubiquitin. Involved in the processing of poly-ubiquitin precursors as well as that of ubiquitinated proteins. Deubiquitinates H2BK143ub1 of histone H2B. This is Ubiquitin carboxyl-terminal hydrolase 26 (UBP26) from Oryza sativa subsp. japonica (Rice).